The sequence spans 336 residues: Foldase protein PrsA (336 aa).

Residues 1 to 22 (MKSAKKLLSVLCLGIFILTFTA) form the signal peptide. Cys-23 carries N-palmitoyl cysteine lipidation. Cys-23 carries S-diacylglycerol cysteine lipidation. Positions 194-286 (PNTMNVSHIL…WGYHIIKINS (93 aa)) constitute a PpiC domain.

This sequence belongs to the PrsA family.

It is found in the cell membrane. It catalyses the reaction [protein]-peptidylproline (omega=180) = [protein]-peptidylproline (omega=0). Functionally, plays a major role in protein secretion by helping the post-translocational extracellular folding of several secreted proteins. This Clostridium botulinum (strain Langeland / NCTC 10281 / Type F) protein is Foldase protein PrsA.